The sequence spans 155 residues: Putative pre-16S rRNA nuclease (155 aa).

This sequence belongs to the YqgF nuclease family.

It localises to the cytoplasm. Its function is as follows. Could be a nuclease involved in processing of the 5'-end of pre-16S rRNA. The sequence is that of Putative pre-16S rRNA nuclease from Wolbachia pipientis wMel.